A 601-amino-acid polypeptide reads, in one-letter code: Ubiquilin-4 (601 aa).

A Ubiquitin-like domain is found at 13 to 87 (IRVTVKTPKD…VHLVIKTPQK (75 aa)). Glycyl lysine isopeptide (Lys-Gly) (interchain with G-Cter in SUMO2) cross-links involve residues Lys23 and Lys62. The segment at 87–155 (KAQDPAAATA…GAGEGSPSAT (69 aa)) is disordered. Over residues 88-138 (AQDPAAATASSPSTPDPASAPSTTPASPATPAQPSTSGSASSDAGSGSRRS) the composition is skewed to low complexity. 2 positions are modified to phosphoserine: Ser98 and Ser144. Gly residues predominate over residues 139–149 (SGGGPSPGAGE). STI1 domains follow at residues 192 to 229 (NPEM…QQLM) and 230 to 261 (ERNP…MQEM). Thr287 is subject to Phosphothreonine. The segment at 301-366 (FGNNPFSSLA…QVHPTVSNPF (66 aa)) is disordered. The span at 307–318 (SSLAGNSDSSSS) shows a compositional bias: low complexity. Ser318 is modified (phosphoserine; by ATM). Residues 329-340 (LPNPWSPSPPTS) are compositionally biased toward pro residues. Residues 344-354 (GSGGEGTGGSG) show a composition bias toward gly residues. Residues 357 to 366 (QVHPTVSNPF) show a composition bias toward polar residues. STI1 domains lie at 393–440 (NPQL…QEQL) and 444–476 (LPVF…QQGL). The interval 490–533 (LGSFGISRTPAPSAGSNAGSTPEAPTSSPATPATSSPTGASSAQ) is disordered. The span at 507 to 533 (AGSTPEAPTSSPATPATSSPTGASSAQ) shows a compositional bias: low complexity. In terms of domain architecture, UBA spans 553 to 598 (QTPEVRFQQQLEQLNSMGFINREANLQALIATGGDINAAIERLLGS).

As to quaternary structure, homooligomer. Binds signal sequences of proteins that are targeted to the endoplasmic reticulum. Interacts (via UBA domain) with GJA1 (not ubiquitinated) and with ubiquitin; both compete for the same binding site. Interacts (via UBA domain) with ubiquitin and with polyubiquitin chains. Interacts (via ubiquitin-like domain) with PSMD2 and PSMD4, regulatory subunits of the 26S proteasome. Interacts with ATXN1/SCA1; interaction with ATXN1 inhibits polyubiquitination of UBQLN4 and interferes with PSMD4 binding. Interacts with HERPUD1. Interacts (via ubiquitin-like domain) with UBQLN1 (via UBA domain). Interacts with UBQLN2. Interacts (via STI1 1 and 2 domains) with MAP1LC3A/B/C. Interacts with BAG6. Interacts with MRE11 (when ubiquitinated); interaction with ubiquitinated MRE11 leads to MRE11 removal from chromatin. Interacts with DESI1/POST; leading to nuclear export. Interacts with BCL2A1 and BCL2L10. In terms of assembly, (Microbial infection) Interacts with Mumps virus protein SH. Post-translationally, phosphorylated by ATM at Ser-318 in response to DNA damage, leading to localization in the nucleus and recruitment to sites of DNA damage. In terms of processing, ubiquitinated; this does not lead to proteasomal degradation. May undergo both 'Lys-48'- and 'Lys-63'-linked polyubiquitination. Highly expressed in pancreas, kidney, skeletal muscle, heart and throughout the brain, and at lower levels in placenta, lung and liver.

The protein resides in the nucleus. It is found in the cytoplasm. It localises to the chromosome. Its subcellular location is the endoplasmic reticulum. The protein localises to the perinuclear region. The protein resides in the cytoplasmic vesicle. It is found in the autophagosome. Functionally, regulator of protein degradation that mediates the proteasomal targeting of misfolded, mislocalized or accumulated proteins. Acts by binding polyubiquitin chains of target proteins via its UBA domain and by interacting with subunits of the proteasome via its ubiquitin-like domain. Key regulator of DNA repair that represses homologous recombination repair: in response to DNA damage, recruited to sites of DNA damage following phosphorylation by ATM and acts by binding and removing ubiquitinated MRE11 from damaged chromatin, leading to MRE11 degradation by the proteasome. MRE11 degradation prevents homologous recombination repair, redirecting double-strand break repair toward non-homologous end joining (NHEJ). Specifically recognizes and binds mislocalized transmembrane-containing proteins and targets them to proteasomal degradation. Collaborates with DESI1/POST in the export of ubiquitinated proteins from the nucleus to the cytoplasm. Also plays a role in the regulation of the proteasomal degradation of non-ubiquitinated GJA1. Acts as an adapter protein that recruits UBQLN1 to the autophagy machinery. Mediates the association of UBQLN1 with autophagosomes and the autophagy-related protein LC3 (MAP1LC3A/B/C) and may assist in the maturation of autophagosomes to autolysosomes by mediating autophagosome-lysosome fusion. The protein is Ubiquilin-4 of Homo sapiens (Human).